A 268-amino-acid chain; its full sequence is 3-methyl-2-oxobutanoate hydroxymethyltransferase (268 aa).

Mg(2+)-binding residues include aspartate 44 and aspartate 83. 3-methyl-2-oxobutanoate is bound by residues 44 to 45 (DS), aspartate 83, and lysine 113. Glutamate 115 is a binding site for Mg(2+). Glutamate 182 serves as the catalytic Proton acceptor.

Belongs to the PanB family. In terms of assembly, homodecamer; pentamer of dimers. It depends on Mg(2+) as a cofactor.

The protein resides in the cytoplasm. It carries out the reaction 3-methyl-2-oxobutanoate + (6R)-5,10-methylene-5,6,7,8-tetrahydrofolate + H2O = 2-dehydropantoate + (6S)-5,6,7,8-tetrahydrofolate. It functions in the pathway cofactor biosynthesis; (R)-pantothenate biosynthesis; (R)-pantoate from 3-methyl-2-oxobutanoate: step 1/2. Functionally, catalyzes the reversible reaction in which hydroxymethyl group from 5,10-methylenetetrahydrofolate is transferred onto alpha-ketoisovalerate to form ketopantoate. The chain is 3-methyl-2-oxobutanoate hydroxymethyltransferase from Synechococcus elongatus (strain ATCC 33912 / PCC 7942 / FACHB-805) (Anacystis nidulans R2).